Here is a 204-residue protein sequence, read N- to C-terminus: Ribosomal RNA small subunit methyltransferase G (204 aa).

The S-adenosyl-L-methionine site is built by Gly73, Phe78, and Arg139.

Belongs to the methyltransferase superfamily. RNA methyltransferase RsmG family.

The protein resides in the cytoplasm. The catalysed reaction is guanosine(527) in 16S rRNA + S-adenosyl-L-methionine = N(7)-methylguanosine(527) in 16S rRNA + S-adenosyl-L-homocysteine. Functionally, specifically methylates the N7 position of guanine in position 527 of 16S rRNA. The protein is Ribosomal RNA small subunit methyltransferase G of Coxiella burnetii (strain RSA 331 / Henzerling II).